The chain runs to 415 residues: L-cysteine:1D-myo-inositol 2-amino-2-deoxy-alpha-D-glucopyranoside ligase (415 aa).

Cysteine 43 is a Zn(2+) binding site. L-cysteinyl-5'-AMP contacts are provided by residues 43–46 (CGIT), threonine 58, and 81–83 (NVT). The 'HIGH' region motif lies at 45 to 55 (ITPYDATHLGH). A 'ERGGDP' region motif is present at residues 187-192 (ERGGDP). An L-cysteinyl-5'-AMP-binding site is contributed by tryptophan 227. Cysteine 231 contacts Zn(2+). An L-cysteinyl-5'-AMP-binding site is contributed by 249 to 251 (GSD). Histidine 256 contacts Zn(2+). Position 283 (isoleucine 283) interacts with L-cysteinyl-5'-AMP. The 'KMSKS' region signature appears at 289–293 (KMSKS).

Belongs to the class-I aminoacyl-tRNA synthetase family. MshC subfamily. Monomer. Zn(2+) is required as a cofactor.

The enzyme catalyses 1D-myo-inositol 2-amino-2-deoxy-alpha-D-glucopyranoside + L-cysteine + ATP = 1D-myo-inositol 2-(L-cysteinylamino)-2-deoxy-alpha-D-glucopyranoside + AMP + diphosphate + H(+). Catalyzes the ATP-dependent condensation of GlcN-Ins and L-cysteine to form L-Cys-GlcN-Ins. The polypeptide is L-cysteine:1D-myo-inositol 2-amino-2-deoxy-alpha-D-glucopyranoside ligase (Saccharomonospora viridis (strain ATCC 15386 / DSM 43017 / JCM 3036 / CCUG 5913 / NBRC 12207 / NCIMB 9602 / P101) (Thermoactinomyces viridis)).